Here is a 427-residue protein sequence, read N- to C-terminus: Four-jointed box protein 1 (427 aa).

Residues 1–18 (MRALSANLFAVLLMCALA) form the signal peptide. Residues Asn-81, Asn-244, and Asn-270 are each glycosylated (N-linked (GlcNAc...) asparagine).

Its subcellular location is the secreted. May act as an inhibitor of dendrite extension and branching. The sequence is that of Four-jointed box protein 1 (fjx1) from Xiphophorus maculatus (Southern platyfish).